An 82-amino-acid polypeptide reads, in one-letter code: MKGMILLISCLMLIEVVVECKEGYPLDTLNGCKVGCFFGTNSWCNDKCKSKTAAKGYCAWPSCYCYGFTDDSKIWDLKKNKC.

A signal peptide spans 1-20 (MKGMILLISCLMLIEVVVEC). Positions 21–82 (KEGYPLDTLN…KIWDLKKNKC (62 aa)) constitute an LCN-type CS-alpha/beta domain. 4 disulfides stabilise this stretch: cysteine 32/cysteine 82, cysteine 36/cysteine 58, cysteine 44/cysteine 63, and cysteine 48/cysteine 65.

The protein belongs to the long (4 C-C) scorpion toxin superfamily. Sodium channel inhibitor family. Beta subfamily. In terms of tissue distribution, expressed by the venom gland.

Its subcellular location is the secreted. Its function is as follows. Beta toxins bind voltage-independently at site-4 of sodium channels (Nav) and shift the voltage of activation toward more negative potentials thereby affecting sodium channel activation and promoting spontaneous and repetitive firing. The protein is Toxin Tpa7 of Tityus pachyurus (Colombian scorpion).